Consider the following 549-residue polypeptide: Glucose-6-phosphate isomerase (549 aa).

Residue E355 is the Proton donor of the active site. Residues H386 and K514 contribute to the active site.

This sequence belongs to the GPI family.

It localises to the cytoplasm. The enzyme catalyses alpha-D-glucose 6-phosphate = beta-D-fructose 6-phosphate. It functions in the pathway carbohydrate biosynthesis; gluconeogenesis. It participates in carbohydrate degradation; glycolysis; D-glyceraldehyde 3-phosphate and glycerone phosphate from D-glucose: step 2/4. Functionally, catalyzes the reversible isomerization of glucose-6-phosphate to fructose-6-phosphate. This Salmonella choleraesuis (strain SC-B67) protein is Glucose-6-phosphate isomerase.